A 408-amino-acid chain; its full sequence is Inhibin beta B chain (408 aa).

Residues 1 to 28 (MDGLPGRALGAACLLMLAVGSLGPGVWG) form the signal peptide. Residues 29 to 60 (SPTPPPLPAAPQPPPPPPGAPGGSQDTCTSCG) are disordered. A propeptide spanning residues 29-293 (SPTPPPLPAA…GDSRHRIRKR (265 aa)) is cleaved from the precursor. The segment covering 30–48 (PTPPPLPAAPQPPPPPPGA) has biased composition (pro residues). Asn-94 carries N-linked (GlcNAc...) asparagine glycosylation. Disulfide bonds link Cys-297–Cys-305, Cys-304–Cys-373, Cys-333–Cys-405, and Cys-337–Cys-407.

It belongs to the TGF-beta family. In terms of assembly, dimeric, linked by one or more disulfide bonds. Inhibin B is a dimer of alpha and beta-B. Activin B is a homodimer of beta-B. Activin AB is a dimer of beta-A and beta-B. Interacts with FST and FSTL3.

The protein resides in the secreted. Functionally, inhibins and activins inhibit and activate, respectively, the secretion of follitropin by the pituitary gland. Inhibins/activins are involved in regulating a number of diverse functions such as hypothalamic and pituitary hormone secretion, gonadal hormone secretion, germ cell development and maturation, erythroid differentiation, insulin secretion, nerve cell survival, embryonic axial development or bone growth, depending on their subunit composition. Inhibins appear to oppose the functions of activins. Activin B is a dimer of alpha and beta-B that plays a role in several essential biological processes including embryonic development, stem cell maintenance and differentiation, haematopoiesis, cell proliferation and wound healing. Signals through type I receptor ACVR1C, abundantly expressed in pancreatic beta cells, and type II receptors like ACVR2A. Upon ligand binding, these receptors phosphorylate intracellular signaling mediators SMAD2 and SMAD3, which form a complex with SMAD4, translocate to the nucleus, and regulate gene expression. Plays a crucial role in the induction of hepcidin by inflammation through activation of ACVR1C and subsequent phosphorylation of SMAD1/5/8. Regulates adipocyte lipid metabolism by decreasing non-esterified fatty acids and glycerol release and increases intracellular triglyceride content. Stimulates wound healing by promoting cell migration and hair follicle regeneration through the JNK and ERK signaling pathways downstream of RHOA. In terms of biological role, inhibin B is a dimer of alpha and beta-B that plays a crucial role in the regulation of the reproductive system by inhibiting the secretion of follicle-stimulating hormone (FSH) from the anterior pituitary gland. Thereby, maintains reproductive homeostasis in both males and females. Acts as a more potent suppressor of FSH release than inhibin A. Functions as competitive receptor antagonist binding activin type II receptors with high affinity in the presence of the TGF-beta type III coreceptor/TGFBR3L. In Bos taurus (Bovine), this protein is Inhibin beta B chain (INHBB).